Here is a 269-residue protein sequence, read N- to C-terminus: Shikimate dehydrogenase (NADP(+)) (269 aa).

Residues 14-16 (SLS) and threonine 61 contribute to the shikimate site. Lysine 65 functions as the Proton acceptor in the catalytic mechanism. An NADP(+)-binding site is contributed by glutamate 76. Shikimate contacts are provided by asparagine 85 and aspartate 99. NADP(+)-binding positions include 123–127 (GAGGA), 146–151 (NRTPER), and isoleucine 209. Tyrosine 211 contacts shikimate. An NADP(+)-binding site is contributed by glycine 231.

It belongs to the shikimate dehydrogenase family. As to quaternary structure, homodimer.

The catalysed reaction is shikimate + NADP(+) = 3-dehydroshikimate + NADPH + H(+). It participates in metabolic intermediate biosynthesis; chorismate biosynthesis; chorismate from D-erythrose 4-phosphate and phosphoenolpyruvate: step 4/7. In terms of biological role, involved in the biosynthesis of the chorismate, which leads to the biosynthesis of aromatic amino acids. Catalyzes the reversible NADPH linked reduction of 3-dehydroshikimate (DHSA) to yield shikimate (SA). This Methanothrix thermoacetophila (strain DSM 6194 / JCM 14653 / NBRC 101360 / PT) (Methanosaeta thermophila) protein is Shikimate dehydrogenase (NADP(+)).